We begin with the raw amino-acid sequence, 469 residues long: 6-phosphofructo-2-kinase/fructose-2,6-bisphosphatase 4 (469 aa).

The segment at M1–P249 is 6-phosphofructo-2-kinase. G46–Y54 serves as a coordination point for ATP. Residues R79 and R103 each coordinate beta-D-fructose 6-phosphate. Residue D129 is part of the active site. Beta-D-fructose 6-phosphate is bound by residues T131 and R137. Residue C159 is part of the active site. ATP is bound at residue N168 to K173. The beta-D-fructose 6-phosphate site is built by K173, R194, and Y198. Residues R250–Q469 form a fructose-2,6-bisphosphatase region. R256 is a binding site for beta-D-fructose 2,6-bisphosphate. H257 serves as the catalytic Tele-phosphohistidine intermediate. Beta-D-fructose 2,6-bisphosphate is bound by residues N263, G269, and R306. E326 (proton donor/acceptor) is an active-site residue. Y337, R351, K355, Y366, Q392, and R396 together coordinate beta-D-fructose 2,6-bisphosphate. F348–R351 contacts ATP. ATP contacts are provided by residues Q392 to R396 and Y428. T444 carries the post-translational modification Phosphothreonine; by PKC.

The protein in the C-terminal section; belongs to the phosphoglycerate mutase family. Homodimer.

The catalysed reaction is beta-D-fructose 2,6-bisphosphate + H2O = beta-D-fructose 6-phosphate + phosphate. The enzyme catalyses beta-D-fructose 6-phosphate + ATP = beta-D-fructose 2,6-bisphosphate + ADP + H(+). The most important regulatory mechanism of these opposing activities is by phosphorylation and dephosphorylation of the enzyme. Functionally, synthesis and degradation of fructose 2,6-bisphosphate. The chain is 6-phosphofructo-2-kinase/fructose-2,6-bisphosphatase 4 (PFKFB4) from Homo sapiens (Human).